The sequence spans 432 residues: C4-dicarboxylate transport protein (432 aa).

A run of 8 helical transmembrane segments spans residues 8 to 28, 44 to 64, 78 to 98, 148 to 168, 188 to 208, 222 to 242, 307 to 327, and 355 to 375; these read ILYV…HYWP, LIKM…IAGM, LLYF…AAHL, GDIL…AVLG, IVHV…AFTI, LIGT…GTIA, IYMT…LTLM, and AATL…ILGI.

Belongs to the dicarboxylate/amino acid:cation symporter (DAACS) (TC 2.A.23) family.

Its subcellular location is the cell inner membrane. In terms of biological role, responsible for the transport of dicarboxylates such as succinate, fumarate, and malate from the periplasm across the membrane. This Cupriavidus necator (strain ATCC 17699 / DSM 428 / KCTC 22496 / NCIMB 10442 / H16 / Stanier 337) (Ralstonia eutropha) protein is C4-dicarboxylate transport protein.